The sequence spans 448 residues: Probable glycine dehydrogenase (decarboxylating) subunit 1 (448 aa).

It belongs to the GcvP family. N-terminal subunit subfamily. The glycine cleavage system is composed of four proteins: P, T, L and H. In this organism, the P 'protein' is a heterodimer of two subunits.

It catalyses the reaction N(6)-[(R)-lipoyl]-L-lysyl-[glycine-cleavage complex H protein] + glycine + H(+) = N(6)-[(R)-S(8)-aminomethyldihydrolipoyl]-L-lysyl-[glycine-cleavage complex H protein] + CO2. Functionally, the glycine cleavage system catalyzes the degradation of glycine. The P protein binds the alpha-amino group of glycine through its pyridoxal phosphate cofactor; CO(2) is released and the remaining methylamine moiety is then transferred to the lipoamide cofactor of the H protein. This Bacillus pumilus (strain SAFR-032) protein is Probable glycine dehydrogenase (decarboxylating) subunit 1.